Consider the following 345-residue polypeptide: Phosphate acyltransferase (345 aa).

The protein belongs to the PlsX family. Homodimer. Probably interacts with PlsY.

Its subcellular location is the cytoplasm. It catalyses the reaction a fatty acyl-[ACP] + phosphate = an acyl phosphate + holo-[ACP]. The protein operates within lipid metabolism; phospholipid metabolism. Functionally, catalyzes the reversible formation of acyl-phosphate (acyl-PO(4)) from acyl-[acyl-carrier-protein] (acyl-ACP). This enzyme utilizes acyl-ACP as fatty acyl donor, but not acyl-CoA. The protein is Phosphate acyltransferase of Anaplasma phagocytophilum (strain HZ).